A 505-amino-acid polypeptide reads, in one-letter code: Maturase K (505 aa).

The protein belongs to the intron maturase 2 family. MatK subfamily.

It localises to the plastid. Its subcellular location is the chloroplast. Usually encoded in the trnK tRNA gene intron. Probably assists in splicing its own and other chloroplast group II introns. The polypeptide is Maturase K (Apocynum androsaemifolium (Spreading dogbane)).